We begin with the raw amino-acid sequence, 422 residues long: p-hydroxyphenylacetate 3-hydroxylase, oxygenase component (422 aa).

Trp112 is an FMN binding site. His120 and Ser146 together coordinate substrate. Residues 146–148 and 169–171 each bind FMN; these read SSI and WSS. 263-266 contributes to the substrate binding site; it reads RPYF. Residues Arg292, Tyr296, 374 to 375, and 396 to 397 each bind FMN; these read AT and HA. Substrate is bound at residue Tyr296.

Belongs to the HpaH/HsaA monooxygenase family. In terms of assembly, homotetramer. The p-hydroxyphenylacetate 3-hydroxylase (HpaH) is composed of an oxygenase component C2 and a reductase component C1.

The catalysed reaction is 4-hydroxyphenylacetate + FMNH2 + O2 = 3,4-dihydroxyphenylacetate + FMN + H2O + H(+). It carries out the reaction 4-hydroxyphenylacetate + FADH2 + O2 = 3,4-dihydroxyphenylacetate + FAD + H2O + H(+). The protein operates within aromatic compound metabolism; 4-hydroxyphenylacetate degradation; pyruvate and succinate semialdehyde from 4-hydroxyphenylacetate: step 1/7. Its activity is regulated as follows. Inhibited by flavin concentrations greater than 15 uM. Also inhibited by excess p-hydroxyphenylacetate (HPA). Functionally, oxygenase component of a two-component system that utilizes reduced FMN (FMNH2) supplied by the reductase component to catalyze the hydroxylation of 4-hydroxyphenylacetic acid, leading to the production of 3,4-dihydroxyphenylacetate (3,4-DHPA). Also utilizes other reduced flavins such as FADH2 and reduced riboflavin to a lesser extent. Only the compounds with a hydroxyl group in the para (p-) position can be hydroxylated. May also oxidize phenol to catechol, and hydroxylate other phenol derivatives. The chain is p-hydroxyphenylacetate 3-hydroxylase, oxygenase component from Acinetobacter baumannii.